A 165-amino-acid polypeptide reads, in one-letter code: MYIEMIDETGQVSQEIMEQTLDLLNFAAQKTGKEEKEMSVTFVTNERSHELNLEYRDTDRPTDVISLEYKPETPILFSQEDLAADPSLAEMMAEFDAYIGELFISIDKAREQSQEYGHSFEREMGFLAVHGFLHINGYDHYTLEEEKEMFTLQEEILTAYGLTRQ.

Zn(2+)-binding residues include H130, H134, and H140.

The protein belongs to the endoribonuclease YbeY family. Zn(2+) is required as a cofactor.

The protein resides in the cytoplasm. Functionally, single strand-specific metallo-endoribonuclease involved in late-stage 70S ribosome quality control and in maturation of the 3' terminus of the 16S rRNA. The polypeptide is Endoribonuclease YbeY (Streptococcus pyogenes serotype M1).